Here is a 27-residue protein sequence, read N- to C-terminus: Secretin (27 aa).

Valine 27 carries the post-translational modification Valine amide.

The protein belongs to the glucagon family.

The protein localises to the secreted. Functionally, hormone involved in different processes, such as regulation of the pH of the duodenal content, food intake and water homeostasis. Exerts its biological effects by binding to secretin receptor (SCTR), a G-protein coupled receptor expressed in the basolateral domain of several cells. Acts as a key gastrointestinal hormone by regulating the pH of the duodenal content. Secreted by S cells of the duodenum in the crypts of Lieberkuehn and regulates the pH of the duodenum by (1) inhibiting the secretion of gastric acid from the parietal cells of the stomach and (2) stimulating the production of bicarbonate (NaHCO(3)) from the ductal cells of the pancreas. Production of bicarbonate is essential to neutralize the pH and ensure no damage is done to the small intestine by the gastric acid. In addition to regulating the pH of the duodenal content, plays a central role in diet induced thermogenesis: acts as a non-sympathetic brown fat (BAT) activator mediating prandial thermogenesis, which consequentially induces satiation. Mechanistically, secretin released by the gut after a meal binds to secretin receptor (SCTR) in brown adipocytes, activating brown fat thermogenesis by stimulating lipolysis, which is sensed in the brain and promotes satiation. Also able to stimulate lipolysis in white adipocytes. Also plays an important role in cellular osmoregulation: released into the systemic circulation in response to hyperosmolality and acts at different levels in the hypothalamus, pituitary and kidney to regulate water homeostasis. Also plays a role in the central nervous system, possibly by acting as a neuropeptide hormone: required for hippocampal synaptic function and neural progenitor cells maintenance. The sequence is that of Secretin from Canis lupus familiaris (Dog).